The following is a 70-amino-acid chain: Large ribosomal subunit protein eL38 (70 aa).

Belongs to the eukaryotic ribosomal protein eL38 family.

This chain is Large ribosomal subunit protein eL38 (rpl-38), found in Ostertagia ostertagi (Brown stomach worm).